A 410-amino-acid polypeptide reads, in one-letter code: Adenosylhomocysteinase (410 aa).

Asp-117 and Glu-142 together coordinate substrate. 143–145 (TTT) contributes to the NAD(+) binding site. 2 residues coordinate substrate: Lys-172 and Asp-176. NAD(+) contacts are provided by residues Asn-177, 206–211 (GYGYCG), Glu-229, 285–287 (AGH), and Asn-332.

Belongs to the adenosylhomocysteinase family. The cofactor is NAD(+).

The protein localises to the cytoplasm. The catalysed reaction is S-adenosyl-L-homocysteine + H2O = L-homocysteine + adenosine. It functions in the pathway amino-acid biosynthesis; L-homocysteine biosynthesis; L-homocysteine from S-adenosyl-L-homocysteine: step 1/1. In terms of biological role, may play a key role in the regulation of the intracellular concentration of adenosylhomocysteine. The polypeptide is Adenosylhomocysteinase (Thermoplasma volcanium (strain ATCC 51530 / DSM 4299 / JCM 9571 / NBRC 15438 / GSS1)).